Here is a 200-residue protein sequence, read N- to C-terminus: Recombination protein RecR (200 aa).

Residues 57 to 72 form a C4-type zinc finger; the sequence is CERCRNYAQSTLCPVC. One can recognise a Toprim domain in the interval 80–175; that stretch reads SLVCIVATPG…GVSRIAQGVP (96 aa).

The protein belongs to the RecR family.

In terms of biological role, may play a role in DNA repair. It seems to be involved in an RecBC-independent recombinational process of DNA repair. It may act with RecF and RecO. The protein is Recombination protein RecR of Alcanivorax borkumensis (strain ATCC 700651 / DSM 11573 / NCIMB 13689 / SK2).